Consider the following 653-residue polypeptide: tRNA-guanine(15) transglycosylase (653 aa).

Asp91 serves as the catalytic Nucleophile. Substrate contacts are provided by Asp126 and Ala193. The Zn(2+) site is built by Cys276, Cys278, and Cys281. Residues 578 to 653 enclose the PUA domain; the sequence is AWRVAVNEES…QAVKTRKGGF (76 aa).

The protein belongs to the archaeosine tRNA-ribosyltransferase family. Zn(2+) serves as cofactor.

It catalyses the reaction guanosine(15) in tRNA + 7-cyano-7-deazaguanine = 7-cyano-7-carbaguanosine(15) in tRNA + guanine. Its pathway is tRNA modification; archaeosine-tRNA biosynthesis. Functionally, exchanges the guanine residue with 7-cyano-7-deazaguanine (preQ0) at position 15 in the dihydrouridine loop (D-loop) of archaeal tRNAs. In Methanothermobacter thermautotrophicus (strain ATCC 29096 / DSM 1053 / JCM 10044 / NBRC 100330 / Delta H) (Methanobacterium thermoautotrophicum), this protein is tRNA-guanine(15) transglycosylase.